Reading from the N-terminus, the 336-residue chain is tRNA N6-adenosine threonylcarbamoyltransferase (336 aa).

Positions 114 and 118 each coordinate Fe cation. Substrate-binding positions include 136 to 140 (LVSGG), aspartate 169, glycine 182, aspartate 186, and asparagine 275. Aspartate 301 serves as a coordination point for Fe cation.

This sequence belongs to the KAE1 / TsaD family. Fe(2+) serves as cofactor.

Its subcellular location is the cytoplasm. The catalysed reaction is L-threonylcarbamoyladenylate + adenosine(37) in tRNA = N(6)-L-threonylcarbamoyladenosine(37) in tRNA + AMP + H(+). Functionally, required for the formation of a threonylcarbamoyl group on adenosine at position 37 (t(6)A37) in tRNAs that read codons beginning with adenine. Is involved in the transfer of the threonylcarbamoyl moiety of threonylcarbamoyl-AMP (TC-AMP) to the N6 group of A37, together with TsaE and TsaB. TsaD likely plays a direct catalytic role in this reaction. This is tRNA N6-adenosine threonylcarbamoyltransferase from Streptococcus pneumoniae (strain CGSP14).